A 326-amino-acid chain; its full sequence is MAFMRSKPSLGSLARVAFRWCGPGVGLVSYSQEPYLVKAVQGKSKPRSPHLTSPQCSPEHRPRRFRPPSASGRTAFSSAPRPKADVMGVADGVGGWRDRGIDARALLPGSDRCFVHAQKPTFDARNPRQLLSECYGEMKRKWKPILGSSTACVVAFNRSESALYTANLGDSGYVVIRNGSVLDRSEEQTHFFNMPFQLTVPPPDSNREMWFCDDPSEAVATRLLLQPDDLVLVATDGLFDNMPEQMLLEMLSKVQGVHEQKAIQEAVNRVVERAGALSINPIYKSPFCLRALENNVPYGGGGKPDDITVVLASVAMTPVQYRGGFQ.

The segment at 40 to 83 (VQGKSKPRSPHLTSPQCSPEHRPRRFRPPSASGRTAFSSAPRPK) is disordered. The region spanning 64–314 (RFRPPSASGR…DDITVVLASV (251 aa)) is the PPM-type phosphatase domain. Residues Asp-91, Gly-92, and Asp-236 each coordinate Mn(2+).

The protein belongs to the PP2C family. Mg(2+) is required as a cofactor. The cofactor is Mn(2+).

The enzyme catalyses O-phospho-L-seryl-[protein] + H2O = L-seryl-[protein] + phosphate. The catalysed reaction is O-phospho-L-threonyl-[protein] + H2O = L-threonyl-[protein] + phosphate. This is Protein phosphatase PTC7 homolog fig from Drosophila persimilis (Fruit fly).